The chain runs to 102 residues: Death-associated protein 1 (102 aa).

A disordered region spans residues 1–102; sequence MSSPPEGKLE…RTQHIQQPRK (102 aa). At serine 2 the chain carries N-acetylserine. Serine 3 carries the post-translational modification Phosphoserine; by MTOR. Lysine 29 carries the post-translational modification N6-acetyllysine. Over residues 32–43 the composition is skewed to basic and acidic residues; sequence HTGDTKEEKDKD. Position 49 is a phosphoserine (serine 49). Serine 51 is subject to Phosphoserine; by MTOR. Serine 91 is subject to Phosphoserine. Over residues 92 to 102 the composition is skewed to polar residues; sequence PRTQHIQQPRK.

Belongs to the DAP-DAPL1 family. Associates with ribosomes; inhibiting translation. Interacts with eiF5a (EIF5A and EIF5A2); inhibiting translation. Post-translationally, phosphorylated. Phosphorylation by MTOR inhibits the suppressive activity of DAP toward autophagy.

Functionally, ribosome-binding protein involved in ribosome hibernation, a process during which ribosomes are stabilized in an inactive state and preserved from proteasomal degradation. Acts via its association with eiF5a (EIF5A and EIF5A2) at the polypeptide exit tunnel of the ribosome, preventing mRNA translation. Involved in ribosome hibernation in the mature oocyte by preventing mRNA translation, leading to ribosome inactivation. Ribosomes, which are produced in large quantities during oogenesis, are stored and translationally repressed in the oocyte and early embryo. Also acts as a negative regulator of autophagy. Involved in mediating interferon-gamma-induced cell death. This chain is Death-associated protein 1, found in Homo sapiens (Human).